Consider the following 471-residue polypeptide: Glutamate--tRNA ligase (471 aa).

Residues 9 to 19 (PSPTGYLHVGG) carry the 'HIGH' region motif. The Zn(2+) site is built by Cys98, Cys100, Cys125, and His127. Positions 237–241 (KLSKR) match the 'KMSKS' region motif. Lys240 serves as a coordination point for ATP.

Belongs to the class-I aminoacyl-tRNA synthetase family. Glutamate--tRNA ligase type 1 subfamily. As to quaternary structure, monomer. The cofactor is Zn(2+).

It localises to the cytoplasm. It carries out the reaction tRNA(Glu) + L-glutamate + ATP = L-glutamyl-tRNA(Glu) + AMP + diphosphate. Catalyzes the attachment of glutamate to tRNA(Glu) in a two-step reaction: glutamate is first activated by ATP to form Glu-AMP and then transferred to the acceptor end of tRNA(Glu). In Salmonella gallinarum (strain 287/91 / NCTC 13346), this protein is Glutamate--tRNA ligase.